The primary structure comprises 66 residues: Large ribosomal subunit protein bL31 (66 aa).

Residues Cys16, Cys18, Cys36, and Cys39 each contribute to the Zn(2+) site.

This sequence belongs to the bacterial ribosomal protein bL31 family. Type A subfamily. In terms of assembly, part of the 50S ribosomal subunit. Requires Zn(2+) as cofactor.

Binds the 23S rRNA. This is Large ribosomal subunit protein bL31 from Bacillus licheniformis (strain ATCC 14580 / DSM 13 / JCM 2505 / CCUG 7422 / NBRC 12200 / NCIMB 9375 / NCTC 10341 / NRRL NRS-1264 / Gibson 46).